We begin with the raw amino-acid sequence, 317 residues long: Brain-specific serine protease 4 (317 aa).

An N-terminal signal peptide occupies residues 1-32 (MVVSGAPPALGGGCLGTFTSLLLLASTAILNA). In terms of domain architecture, Peptidase S1 spans 50–290 (VVGGEDSTDS…HRSWVEKIVQ (241 aa)). Asn70 carries N-linked (GlcNAc...) asparagine glycosylation. A disulfide bridge links Cys75 with Cys91. Residues His90 and Asp141 each act as charge relay system in the active site. Disulfide bonds link Cys175–Cys248, Cys208–Cys227, and Cys238–Cys266. Ser242 serves as the catalytic Charge relay system.

The protein belongs to the peptidase S1 family. In terms of tissue distribution, expressed abundantly in the epithelial cells of the airways, including trachea, esophagus and fetal lung. Scarce in adult lung. Expressed at low levels in placenta, pancreas, prostate and thyroid gland.

It localises to the secreted. Functionally, preferentially cleaves the synthetic substrate H-D-Leu-Thr-Arg-pNA compared to tosyl-Gly-Pro-Arg-pNA. The sequence is that of Brain-specific serine protease 4 (PRSS22) from Homo sapiens (Human).